The sequence spans 419 residues: 3-isopropylmalate dehydratase large subunit (419 aa).

The [4Fe-4S] cluster site is built by Cys300, Cys360, and Cys363.

It belongs to the aconitase/IPM isomerase family. LeuC type 2 subfamily. In terms of assembly, heterodimer of LeuC and LeuD. [4Fe-4S] cluster is required as a cofactor.

The catalysed reaction is (2R,3S)-3-isopropylmalate = (2S)-2-isopropylmalate. It participates in amino-acid biosynthesis; L-leucine biosynthesis; L-leucine from 3-methyl-2-oxobutanoate: step 2/4. Its function is as follows. Catalyzes the isomerization between 2-isopropylmalate and 3-isopropylmalate, via the formation of 2-isopropylmaleate. The sequence is that of 3-isopropylmalate dehydratase large subunit from Nitratidesulfovibrio vulgaris (strain ATCC 29579 / DSM 644 / CCUG 34227 / NCIMB 8303 / VKM B-1760 / Hildenborough) (Desulfovibrio vulgaris).